The primary structure comprises 256 residues: MAVGKNKRLSKGKKGIKKKVVDPFSRKDWYDIKAPSIFEVRNVGKTLANRSQGLKNANDSLKGRIIEVSLADLNKDEEQSFRKIKLRIDEIQGKNCLTNFHGMDFTSDKLRSLVRKWQTLVEAHVDVKTTDGYLLRLFAIGFTKRRPSQVRKTTYAQSSQVREIRKKMFEIMTREATNCDLKELVQKFVPEAIGREIEKAARSIYPLQNVYVRKAKILKSPKFDMSKLLELHGDSTDETGTRIAKDFKEPEILESV.

Ala-2 carries the N-acetylalanine; partial modification.

Belongs to the eukaryotic ribosomal protein eS1 family. In terms of assembly, component of the small ribosomal subunit. Mature ribosomes consist of a small (40S) and a large (60S) subunit. The 40S subunit contains about 33 different proteins and 1 molecule of RNA (18S). The 60S subunit contains about 49 different proteins and 3 molecules of RNA (25S, 5.8S and 5S).

It localises to the cytoplasm. The protein is Small ribosomal subunit protein eS1 of Laccaria bicolor (strain S238N-H82 / ATCC MYA-4686) (Bicoloured deceiver).